The primary structure comprises 212 residues: Uridine kinase (212 aa).

13-20 lines the ATP pocket; sequence GGSGSGKT.

Belongs to the uridine kinase family.

It localises to the cytoplasm. The enzyme catalyses uridine + ATP = UMP + ADP + H(+). It catalyses the reaction cytidine + ATP = CMP + ADP + H(+). Its pathway is pyrimidine metabolism; CTP biosynthesis via salvage pathway; CTP from cytidine: step 1/3. It functions in the pathway pyrimidine metabolism; UMP biosynthesis via salvage pathway; UMP from uridine: step 1/1. The chain is Uridine kinase from Bacillus anthracis (strain A0248).